Here is a 313-residue protein sequence, read N- to C-terminus: Ribosomal RNA small subunit methyltransferase H (313 aa).

Residues 35-37, Asp-55, Phe-80, Asp-102, and Gln-109 contribute to the S-adenosyl-L-methionine site; that span reads GGH.

Belongs to the methyltransferase superfamily. RsmH family.

It is found in the cytoplasm. It carries out the reaction cytidine(1402) in 16S rRNA + S-adenosyl-L-methionine = N(4)-methylcytidine(1402) in 16S rRNA + S-adenosyl-L-homocysteine + H(+). Its function is as follows. Specifically methylates the N4 position of cytidine in position 1402 (C1402) of 16S rRNA. This Shewanella woodyi (strain ATCC 51908 / MS32) protein is Ribosomal RNA small subunit methyltransferase H.